Reading from the N-terminus, the 390-residue chain is Fluoride export protein 1 (390 aa).

Positions 1–22 (MVAPLVSESQSSSIEETDEQQQ) are disordered. The Cytoplasmic portion of the chain corresponds to 1–72 (MVAPLVSESQ…RFLDKTQKYY (72 aa)). The helical transmembrane segment at 73-93 (PVILNIVHGAIWGVLVRKGLM) threads the bilayer. Residues 94–100 (SLTTYSG) lie on the Extracellular side of the membrane. A helical membrane pass occupies residues 101-121 (SFLSGVIWANFAACVVMGLAI). Residues 122 to 143 (DGEVFWIRLLEEKDYPNKGAIP) lie on the Cytoplasmic side of the membrane. The helical transmembrane segment at 144–164 (VYTGLTTGFCGTVSSFSSVIL) threads the bilayer. Residues 165-185 (EAFNKAADTDIGVRHHYPNGA) are Extracellular-facing. A helical transmembrane segment spans residues 186–206 (YGIMQFLAVILAQFGLSIMGF). Residues 207–229 (HMGKQFSAVVDNYLPLVTKRIYK) lie on the Cytoplasmic side of the membrane. The chain crosses the membrane as a helical span at residues 230-250 (VLELTSMILGVVLVVITCILI). Over 251–256 (GVKKQG) the chain is Extracellular. The chain crosses the membrane as a helical span at residues 257–279 (SWRSWTFSMLFAPFGALLRYYLS). Residues 280–290 (KFLNNKVSNFP) are Cytoplasmic-facing. The chain crosses the membrane as a helical span at residues 291–311 (LGTFTANFLGTLLLAVFTLLA). Over 312–338 (RGKLPGGKGHIVTNTIALHVLEGLDDG) the chain is Extracellular. A helical transmembrane segment spans residues 339–359 (FCGGLTTVSTFVVELFGLKTL). Topologically, residues 360–368 (FSYRYGTIS) are cytoplasmic. Residues 369–389 (ILVCFAGVVLILGSYNWSVGL) form a helical membrane-spanning segment. Asp390 is a topological domain (extracellular).

The protein belongs to the fluoride channel Fluc/FEX (TC 1.A.43) family.

The protein localises to the cell membrane. It catalyses the reaction fluoride(in) = fluoride(out). Its function is as follows. Fluoride channel required for the rapid expulsion of cytoplasmic fluoride. This Candida albicans (strain SC5314 / ATCC MYA-2876) (Yeast) protein is Fluoride export protein 1.